Reading from the N-terminus, the 358-residue chain is Malate dehydrogenase 2, glyoxysomal (358 aa).

A glyoxysome-targeting transit peptide spans 1 to 38 (MEFRGDANKRIAMISAHLQPSFTPQMEAKNSVMGRENC). Residues 53-59 (GAAGGIG) and aspartate 79 contribute to the NAD(+) site. The substrate site is built by arginine 126 and arginine 132. Residues asparagine 139 and 162–164 (ISN) each bind NAD(+). Residues asparagine 164 and arginine 198 each contribute to the substrate site. Histidine 222 serves as the catalytic Proton acceptor. Methionine 273 serves as a coordination point for NAD(+).

The protein belongs to the LDH/MDH superfamily. MDH type 1 family. As to quaternary structure, homodimer.

It localises to the glyoxysome. It catalyses the reaction (S)-malate + NAD(+) = oxaloacetate + NADH + H(+). This chain is Malate dehydrogenase 2, glyoxysomal (MDH2), found in Brassica napus (Rape).